Consider the following 483-residue polypeptide: Regulatory protein ViaA (483 aa).

Belongs to the ViaA family. Homodimer. Interacts with RavA.

It localises to the cytoplasm. Component of the RavA-ViaA chaperone complex, which may act on the membrane to optimize the function of some of the respiratory chains. ViaA stimulates the ATPase activity of RavA. The chain is Regulatory protein ViaA from Escherichia coli O9:H4 (strain HS).